The primary structure comprises 368 residues: Glycolate oxidase 3 (368 aa).

Met-1 carries the post-translational modification N-acetylmethionine. Positions 1–359 constitute an FMN hydroxy acid dehydrogenase domain; sequence MEITNVMEYE…SRTHIKTDWD (359 aa). Tyr-24 contacts glyoxylate. Residues 77–79, Ser-106, 127–129, and Thr-155 each bind FMN; these read PTA and QLY. Tyr-129 is a binding site for glyoxylate. Arg-164 contributes to the glyoxylate binding site. The FMN site is built by Lys-230 and Ser-252. The glyoxylate site is built by His-254 and Arg-257. The active-site Proton acceptor is the His-254. FMN is bound by residues 285-289 and 308-309; these read DGGVR and GR.

This sequence belongs to the FMN-dependent alpha-hydroxy acid dehydrogenase family. In terms of assembly, homotetramer. FMN is required as a cofactor.

The protein resides in the peroxisome. The enzyme catalyses glycolate + O2 = glyoxylate + H2O2. The protein operates within photosynthesis; photorespiration; glycine from 2-phosphoglycolate: step 2/3. In terms of biological role, catalyzes the oxidation of glycolate to glyoxylate, with a reduction of O2 to H2O2. Is a key enzyme in photorespiration in green plants. The chain is Glycolate oxidase 3 (GLO5) from Arabidopsis thaliana (Mouse-ear cress).